Consider the following 111-residue polypeptide: uncharacterized protein (111 aa).

The chain crosses the membrane as a helical span at residues 18 to 41; it reads FFYFFFISFYTLWIVFFLLHLSFF.

The protein localises to the membrane. This is an uncharacterized protein from Saccharomyces cerevisiae (strain ATCC 204508 / S288c) (Baker's yeast).